The primary structure comprises 246 residues: LexA repressor (246 aa).

A disordered region spans residues 1–34 (MATPQTGKKTPSRRVSELPDGPPDATGLTPRQQR). A DNA-binding region (H-T-H motif) is located at residues 52–72 (MREIGEAVGLTSSSSVAHQLK). Catalysis depends on for autocatalytic cleavage activity residues serine 170 and lysine 207.

It belongs to the peptidase S24 family. In terms of assembly, homodimer.

The catalysed reaction is Hydrolysis of Ala-|-Gly bond in repressor LexA.. In terms of biological role, represses a number of genes involved in the response to DNA damage (SOS response), including recA and lexA. In the presence of single-stranded DNA, RecA interacts with LexA causing an autocatalytic cleavage which disrupts the DNA-binding part of LexA, leading to derepression of the SOS regulon and eventually DNA repair. The chain is LexA repressor from Nocardioides sp. (strain ATCC BAA-499 / JS614).